Reading from the N-terminus, the 768-residue chain is Pentatricopeptide repeat-containing protein At3g53360, mitochondrial (768 aa).

A mitochondrion-targeting transit peptide spans Met1–Tyr70. PPR repeat units follow at residues Thr30–Asn60, Arg66–Tyr100, Asp101–Arg131, Asn132–Pro166, Asp167–Ser201, His202–Lys232, Asp233–His267, Asn269–Gly303, Asn304–Pro334, Asp335–Pro369, Asp370–Ala404, Asp405–Asn435, Asp437–Pro471, Asp472–Pro506, Glu507–Arg537, Asp538–Pro572, Asn573–Pro608, and Thr609–Glu639. A type E motif region spans residues Val644–Glu719. A type E(+) motif region spans residues Asp720–Leu750.

It belongs to the PPR family. PCMP-E subfamily.

The protein resides in the mitochondrion. In Arabidopsis thaliana (Mouse-ear cress), this protein is Pentatricopeptide repeat-containing protein At3g53360, mitochondrial (PCMP-E86).